Reading from the N-terminus, the 211-residue chain is MTIPLTLKQRATGAQPRAMRREGRIPAVLYGHRGTQSLALELEQRTAEDLLKRVTINNTILPLKVERGWSGDVLLREVQHDAVGGKLLHLSFFAVAGHGSITLDLPLVFTGEAVGVKMDGGLLEKVLTQLTVNTPPTDVPEAIEVDISTMQVGDMLYVKDLVLPPGIEVVNTPDLVVAHLTPSPTGRALQSMDAAESAVEQPGEQPATAAG.

The disordered stretch occupies residues 186–211 (GRALQSMDAAESAVEQPGEQPATAAG).

Belongs to the bacterial ribosomal protein bL25 family. CTC subfamily. Part of the 50S ribosomal subunit; part of the 5S rRNA/L5/L18/L25 subcomplex. Contacts the 5S rRNA. Binds to the 5S rRNA independently of L5 and L18.

Its function is as follows. This is one of the proteins that binds to the 5S RNA in the ribosome where it forms part of the central protuberance. The polypeptide is Large ribosomal subunit protein bL25 (Gloeobacter violaceus (strain ATCC 29082 / PCC 7421)).